A 105-amino-acid polypeptide reads, in one-letter code: Transmembrane protein 273 (105 aa).

The N-terminal stretch at 1–19 (MNLGVSMLRILFLLDVGGA) is a signal peptide. At 20-38 (QVLATGKTPGAEIDFKYAL) the chain is on the extracellular side. Residues 39 to 59 (IGTAVGVAISAGFLALKICMI) form a helical membrane-spanning segment. The Cytoplasmic portion of the chain corresponds to 60–105 (RRHLFDDDSSDLKSTPGGLSDTIPLKKRAPRRNHNFSKRDAQVIEL).

The protein localises to the membrane. The protein is Transmembrane protein 273 of Homo sapiens (Human).